A 129-amino-acid chain; its full sequence is Small ribosomal subunit protein uS11 (129 aa).

The protein belongs to the universal ribosomal protein uS11 family. As to quaternary structure, part of the 30S ribosomal subunit. Interacts with proteins S7 and S18. Binds to IF-3.

In terms of biological role, located on the platform of the 30S subunit, it bridges several disparate RNA helices of the 16S rRNA. Forms part of the Shine-Dalgarno cleft in the 70S ribosome. The protein is Small ribosomal subunit protein uS11 of Rhizobium etli (strain CIAT 652).